A 373-amino-acid chain; its full sequence is 4-hydroxy-3-methylbut-2-en-1-yl diphosphate synthase (flavodoxin) (373 aa).

[4Fe-4S] cluster-binding residues include cysteine 269, cysteine 272, cysteine 304, and glutamate 311.

It belongs to the IspG family. The cofactor is [4Fe-4S] cluster.

The enzyme catalyses (2E)-4-hydroxy-3-methylbut-2-enyl diphosphate + oxidized [flavodoxin] + H2O + 2 H(+) = 2-C-methyl-D-erythritol 2,4-cyclic diphosphate + reduced [flavodoxin]. It functions in the pathway isoprenoid biosynthesis; isopentenyl diphosphate biosynthesis via DXP pathway; isopentenyl diphosphate from 1-deoxy-D-xylulose 5-phosphate: step 5/6. In terms of biological role, converts 2C-methyl-D-erythritol 2,4-cyclodiphosphate (ME-2,4cPP) into 1-hydroxy-2-methyl-2-(E)-butenyl 4-diphosphate. The sequence is that of 4-hydroxy-3-methylbut-2-en-1-yl diphosphate synthase (flavodoxin) from Baumannia cicadellinicola subsp. Homalodisca coagulata.